A 281-amino-acid chain; its full sequence is Nucleoid occlusion protein (281 aa).

The H-T-H motif DNA-binding region spans 145 to 164 (EALAQRLGKGQSTIANKLRL).

The protein belongs to the ParB family.

The protein resides in the cytoplasm. The protein localises to the nucleoid. In terms of biological role, effects nucleoid occlusion by binding relatively nonspecifically to DNA and preventing the assembly of the division machinery in the vicinity of the nucleoid, especially under conditions that disturb the cell cycle. It helps to coordinate cell division and chromosome segregation by preventing the formation of the Z ring through the nucleoid, which would cause chromosome breakage. The protein is Nucleoid occlusion protein of Geobacillus sp. (strain WCH70).